The chain runs to 517 residues: tRNA (guanine-N(7)-)-methyltransferase non-catalytic subunit trm82 (517 aa).

Positions 40-117 (WKSPVPESMS…TKNSSPKILE (78 aa)) are disordered. The segment covering 52–64 (KTTEEETQTKNED) has biased composition (basic and acidic residues). WD repeat units follow at residues 116 to 158 (LEPS…GLRQ), 260 to 301 (GHVS…HIIE), and 306 to 346 (GHIE…LLSK).

Belongs to the WD repeat TRM82 family. Forms a heterodimer with the catalytic subunit trm8.

It localises to the nucleus. It functions in the pathway tRNA modification; N(7)-methylguanine-tRNA biosynthesis. Its function is as follows. Required for the formation of N(7)-methylguanine at position 46 (m7G46) in tRNA. In the complex, it is required to stabilize and induce conformational changes of the catalytic subunit. The protein is tRNA (guanine-N(7)-)-methyltransferase non-catalytic subunit trm82 (trm82) of Sclerotinia sclerotiorum (strain ATCC 18683 / 1980 / Ss-1) (White mold).